The sequence spans 339 residues: tRNA pseudouridine synthase B (339 aa).

The active-site Nucleophile is D40. The RPE1 insert domain maps to 262–307; it reads FRRLSKFAYREEFEENTERSTAAYTLVREDANTGLTYKLPLEVELS.

It belongs to the pseudouridine synthase TruB family. Type 1 subfamily.

The enzyme catalyses uridine(55) in tRNA = pseudouridine(55) in tRNA. Functionally, responsible for synthesis of pseudouridine from uracil-55 in the psi GC loop of transfer RNAs. This chain is tRNA pseudouridine synthase B, found in Rickettsia felis (strain ATCC VR-1525 / URRWXCal2) (Rickettsia azadi).